Reading from the N-terminus, the 396-residue chain is Elongation factor Tu (396 aa).

A tr-type G domain is found at Lys-10–Glu-206. Positions Gly-19–Thr-26 are G1. Residue Gly-19–Thr-26 coordinates GTP. Thr-26 lines the Mg(2+) pocket. The segment at Gly-60 to Ser-64 is G2. Residues Asp-81–Gly-84 are G3. Residues Asp-81–His-85 and Asn-136–Asp-139 contribute to the GTP site. The interval Asn-136–Asp-139 is G4. The tract at residues Ser-174–Leu-176 is G5.

It belongs to the TRAFAC class translation factor GTPase superfamily. Classic translation factor GTPase family. EF-Tu/EF-1A subfamily. Monomer.

Its subcellular location is the cytoplasm. The enzyme catalyses GTP + H2O = GDP + phosphate + H(+). GTP hydrolase that promotes the GTP-dependent binding of aminoacyl-tRNA to the A-site of ribosomes during protein biosynthesis. The sequence is that of Elongation factor Tu from Gluconobacter oxydans (strain 621H) (Gluconobacter suboxydans).